We begin with the raw amino-acid sequence, 245 residues long: Myelin protein P0 (245 aa).

The signal sequence occupies residues 1 to 28; it reads MEPSGLRTPCSLLALVLLSALVLTPTLA. Residues 29–143 form the Ig-like V-type domain; the sequence is IEVYTDREVY…VGKSSYVHLQ (115 aa). Residues 29–153 are Extracellular-facing; that stretch reads IEVYTDREVY…VQEKGPARAG (125 aa). C49 and C125 are disulfide-bonded. N-linked (GlcNAc...) asparagine glycosylation is present at N120. The helical transmembrane segment at 154–174 threads the bilayer; the sequence is LILGIIIAVALALVIVVTILI. Residues 175–245 lie on the Cytoplasmic side of the membrane; that stretch reads LLIRYCWLRR…GIGDSRKDRK (71 aa). Basic and acidic residues-rich tracts occupy residues 199–208 and 224–245; these read KLHKAKDSSK and TRGKSSEKKAKGGIGDSRKDRK. Residues 199-245 form a disordered region; the sequence is KLHKAKDSSKRSSRQTPILYAMLDQTRGKSSEKKAKGGIGDSRKDRK.

This sequence belongs to the myelin P0 protein family.

Its subcellular location is the cell membrane. Its function is as follows. Creation of an extracellular membrane face which guides the wrapping process and ultimately compacts adjacent lamellae. The protein is Myelin protein P0 (mpz) of Xenopus laevis (African clawed frog).